Consider the following 56-residue polypeptide: Small ribosomal subunit protein uS14 (56 aa).

Residues Cys-21, Cys-24, Cys-39, and Cys-42 each coordinate Zn(2+).

This sequence belongs to the universal ribosomal protein uS14 family. Zn(2+) serves as cofactor.

This chain is Small ribosomal subunit protein uS14 (RPS29), found in Debaryomyces hansenii (strain ATCC 36239 / CBS 767 / BCRC 21394 / JCM 1990 / NBRC 0083 / IGC 2968) (Yeast).